A 220-amino-acid chain; its full sequence is Putative O-methyltransferase Mjls_4009 (220 aa).

Residues V47, E69, 71–72 (GT), S77, D95, and V96 contribute to the S-adenosyl-L-methionine site. D143 is a substrate binding site. Residue D145 coordinates S-adenosyl-L-methionine.

Belongs to the class I-like SAM-binding methyltransferase superfamily. Cation-dependent O-methyltransferase family.

This is Putative O-methyltransferase Mjls_4009 from Mycobacterium sp. (strain JLS).